The chain runs to 398 residues: Dual-specificity RNA methyltransferase RlmN (398 aa).

The active-site Proton acceptor is Glu100. A Radical SAM core domain is found at 106 to 345; that stretch reads DGDRGTLCVS…TTVRTTRGDD (240 aa). A disulfide bridge links Cys113 with Cys350. 3 residues coordinate [4Fe-4S] cluster: Cys120, Cys124, and Cys127. Residues 174–175, Ser206, 228–230, and Asn307 each bind S-adenosyl-L-methionine; these read GE and SLH. Cys350 serves as the catalytic S-methylcysteine intermediate.

It belongs to the radical SAM superfamily. RlmN family. Requires [4Fe-4S] cluster as cofactor.

It is found in the cytoplasm. It carries out the reaction adenosine(2503) in 23S rRNA + 2 reduced [2Fe-2S]-[ferredoxin] + 2 S-adenosyl-L-methionine = 2-methyladenosine(2503) in 23S rRNA + 5'-deoxyadenosine + L-methionine + 2 oxidized [2Fe-2S]-[ferredoxin] + S-adenosyl-L-homocysteine. The catalysed reaction is adenosine(37) in tRNA + 2 reduced [2Fe-2S]-[ferredoxin] + 2 S-adenosyl-L-methionine = 2-methyladenosine(37) in tRNA + 5'-deoxyadenosine + L-methionine + 2 oxidized [2Fe-2S]-[ferredoxin] + S-adenosyl-L-homocysteine. Functionally, specifically methylates position 2 of adenine 2503 in 23S rRNA and position 2 of adenine 37 in tRNAs. m2A2503 modification seems to play a crucial role in the proofreading step occurring at the peptidyl transferase center and thus would serve to optimize ribosomal fidelity. The chain is Dual-specificity RNA methyltransferase RlmN from Saccharophagus degradans (strain 2-40 / ATCC 43961 / DSM 17024).